Consider the following 335-residue polypeptide: 3-ketodihydrosphingosine reductase TSC10 (335 aa).

NADPH-binding residues include Gly42, Ser44, Ser45, Gly46, Arg67, Asp68, Lys71, Asp95, and Leu96. The GXSXG motif lies at 42-46; it reads GGSSG. Residues 141–207 are involved in homodimer formation; it reads LKDGLDGVYW…RGLSDALRSE (67 aa). Tyr190 (proton acceptor) is an active-site residue. Tyr190, Lys194, and Ile223 together coordinate NADP(+). The active-site Lowers pKa of active site Tyr is Lys194. Residues 288 to 308 traverse the membrane as a helical segment; it reads TNNFLLDTLWLIVSSVGVPIW.

Belongs to the short-chain dehydrogenases/reductases (SDR) family. In terms of assembly, homodimer; a minor portion forms homotetramers.

Its subcellular location is the endoplasmic reticulum membrane. The catalysed reaction is sphinganine + NADP(+) = 3-oxosphinganine + NADPH + H(+). It participates in lipid metabolism; sphingolipid metabolism. In terms of biological role, catalyzes the reduction of 3'-oxosphinganine (3-ketodihydrosphingosine/KDS) to sphinganine (dihydrosphingosine/DHS), the second step of de novo sphingolipid biosynthesis. The polypeptide is 3-ketodihydrosphingosine reductase TSC10 (TSC10) (Cryptococcus neoformans var. neoformans serotype D (strain JEC21 / ATCC MYA-565) (Filobasidiella neoformans)).